Reading from the N-terminus, the 760-residue chain is E4 SUMO-protein ligase PIAL2 (760 aa).

Residues 143-301 (IKSPGSTFSQ…GVIEASPDSD (159 aa)) are interacting domain (IND), required for interaction with MOM1 and PIAL1. The segment at 298-379 (PDSDIIEGPS…MAKILKDVEH (82 aa)) adopts an SP-RING-type zinc-finger fold. The Zn(2+) site is built by C329, H331, C352, and C355. The segment covering 440–450 (GDNKVEDRKPC) has biased composition (basic and acidic residues). Disordered regions lie at residues 440 to 471 (GDNK…SNDD), 492 to 522 (LGNT…MSID), 631 to 657 (GVRG…SVSR), and 699 to 760 (SQQS…GPTS). Composition is skewed to polar residues over residues 492–518 (LGNT…SQIP), 631–653 (GVRG…PTVQ), and 699–729 (SQQS…SPFT).

This sequence belongs to the PIAL protein ligase family. In terms of assembly, homodimer. Interacts with MOM1 and PIAL1 to form a high molecular mass complex which mediates transcriptional silencing at heterochromatin regions. In terms of tissue distribution, expressed in leaves, stems and flowers, and, at low levels, in siliques and old leaves.

It is found in the nucleus. The protein operates within protein modification; protein sumoylation. Together with MOM1 and PIAL1, regulates transcriptional gene silencing (TGS) independently of changes in DNA methylation. E4-type SUMO ligase that promotes SUMO chain formation in a SCE1-dependent manner and thus contributes to a pathway for proteolytic removal of sumoylation substrates. Involved in stress responses and sulfur metabolism. This chain is E4 SUMO-protein ligase PIAL2, found in Arabidopsis thaliana (Mouse-ear cress).